The following is a 1009-amino-acid chain: DENN domain-containing protein 2A (1009 aa).

Disordered stretches follow at residues 15-153 (AEAS…LRFQ), 171-334 (KDGS…HRKS), 434-479 (KLLD…KKRK), and 498-532 (KRVK…LKAH). Basic and acidic residues-rich tracts occupy residues 45 to 59 (NIKD…KKEV), 130 to 147 (QPER…EPRL), 218 to 247 (HPSD…DRSL), and 275 to 284 (HAGEGDKDGK). Residues 297 to 314 (PPLPSLPPPPLPSSPPPS) are compositionally biased toward pro residues. Basic and acidic residues predominate over residues 434–443 (KLLDTRKLSR). Residues 503-513 (LSQSMESNSGK) are compositionally biased toward polar residues. Position 551 is a phosphoserine (S551). Residues 566 to 715 (EYFVVVSLHK…PFPALGKTIL (150 aa)) form the uDENN domain. Positions 737–870 (RLEHVDFESL…LQVALEHILE (134 aa)) constitute a cDENN domain. The dDENN domain maps to 872 to 969 (RNELACEQDE…QERELRRQDA (98 aa)).

It localises to the cytoplasm. The protein localises to the cytoskeleton. In terms of biological role, guanine nucleotide exchange factor (GEF) which may activate RAB9A and RAB9B. Promotes the exchange of GDP to GTP, converting inactive GDP-bound Rab proteins into their active GTP-bound form. May play a role in late endosomes back to trans-Golgi network/TGN transport. The polypeptide is DENN domain-containing protein 2A (DENND2A) (Homo sapiens (Human)).